The sequence spans 345 residues: Uroporphyrinogen decarboxylase (345 aa).

Substrate is bound by residues 27 to 31 (RQAGR), D77, Y152, S207, and H323.

Belongs to the uroporphyrinogen decarboxylase family. In terms of assembly, homodimer.

Its subcellular location is the cytoplasm. The enzyme catalyses uroporphyrinogen III + 4 H(+) = coproporphyrinogen III + 4 CO2. The protein operates within porphyrin-containing compound metabolism; protoporphyrin-IX biosynthesis; coproporphyrinogen-III from 5-aminolevulinate: step 4/4. Catalyzes the decarboxylation of four acetate groups of uroporphyrinogen-III to yield coproporphyrinogen-III. The chain is Uroporphyrinogen decarboxylase from Maricaulis maris (strain MCS10) (Caulobacter maris).